Reading from the N-terminus, the 335-residue chain is NADH-ubiquinone oxidoreductase chain 2 (335 aa).

11 consecutive transmembrane segments (helical) span residues 7 to 27 (PTMA…VSSA), 28 to 48 (NWMF…PIMM), 58 to 78 (GAVK…MSST), 81 to 101 (WMTF…AIML), 110 to 130 (FWYP…LSSW), 147 to 167 (NMNF…VIGM), 174 to 194 (TIMA…AAVY), 200 to 220 (IMYF…MGYL), 240 to 260 (MALL…GFMP), 274 to 294 (IILL…LNII), and 315 to 335 (SLKF…FIML).

It belongs to the complex I subunit 2 family.

It localises to the mitochondrion inner membrane. It catalyses the reaction a ubiquinone + NADH + 5 H(+)(in) = a ubiquinol + NAD(+) + 4 H(+)(out). Its function is as follows. Core subunit of the mitochondrial membrane respiratory chain NADH dehydrogenase (Complex I) that is believed to belong to the minimal assembly required for catalysis. Complex I functions in the transfer of electrons from NADH to the respiratory chain. The immediate electron acceptor for the enzyme is believed to be ubiquinone. In Lumbricus terrestris (Common earthworm), this protein is NADH-ubiquinone oxidoreductase chain 2 (ND2).